We begin with the raw amino-acid sequence, 283 residues long: Bifunctional protein FolD (283 aa).

Residues glycine 165–serine 167, serine 190, and valine 231 contribute to the NADP(+) site.

The protein belongs to the tetrahydrofolate dehydrogenase/cyclohydrolase family. Homodimer. Interacts with BrxC.

It catalyses the reaction (6R)-5,10-methylene-5,6,7,8-tetrahydrofolate + NADP(+) = (6R)-5,10-methenyltetrahydrofolate + NADPH. The catalysed reaction is (6R)-5,10-methenyltetrahydrofolate + H2O = (6R)-10-formyltetrahydrofolate + H(+). It functions in the pathway one-carbon metabolism; tetrahydrofolate interconversion. In terms of biological role, catalyzes the oxidation of 5,10-methylenetetrahydrofolate to 5,10-methenyltetrahydrofolate and then the hydrolysis of 5,10-methenyltetrahydrofolate to 10-formyltetrahydrofolate. This chain is Bifunctional protein FolD, found in Bacillus subtilis (strain 168).